Consider the following 342-residue polypeptide: uncharacterized protein (342 aa).

Cys41, His63, Cys94, Cys97, Cys100, Cys108, and Glu149 together coordinate Zn(2+).

This sequence belongs to the zinc-containing alcohol dehydrogenase family. Zn(2+) is required as a cofactor.

This is an uncharacterized protein from Haemophilus influenzae (strain ATCC 51907 / DSM 11121 / KW20 / Rd).